Consider the following 120-residue polypeptide: Sirohydrochlorin cobaltochelatase (120 aa).

Histidine 9 acts as the Proton acceptor in catalysis. Residue histidine 9 coordinates Co(2+). Substrate-binding positions include glutamine 43 and 68–73 (FAAGTH). Histidine 73 provides a ligand contact to Co(2+).

It belongs to the CbiX family. CbiXS subfamily. As to quaternary structure, homotetramer; dimer of dimers.

It carries out the reaction Co-sirohydrochlorin + 2 H(+) = sirohydrochlorin + Co(2+). It functions in the pathway cofactor biosynthesis; adenosylcobalamin biosynthesis; cob(II)yrinate a,c-diamide from sirohydrochlorin (anaerobic route): step 1/10. Catalyzes the insertion of Co(2+) into sirohydrochlorin as part of the anaerobic pathway to cobalamin biosynthesis. In Sulfurisphaera tokodaii (strain DSM 16993 / JCM 10545 / NBRC 100140 / 7) (Sulfolobus tokodaii), this protein is Sirohydrochlorin cobaltochelatase.